A 62-amino-acid chain; its full sequence is UPF0291 protein CLD_1956 (62 aa).

Belongs to the UPF0291 family.

It localises to the cytoplasm. The chain is UPF0291 protein CLD_1956 from Clostridium botulinum (strain Okra / Type B1).